Here is a 607-residue protein sequence, read N- to C-terminus: uncharacterized protein (607 aa).

A DNA-binding region (zn(2)-C6 fungal-type) is located at residues 16 to 44 (CTVCRKRKLKCDGNKPCGRCIRLNTPKEC).

The protein resides in the nucleus. This is an uncharacterized protein from Saccharomyces cerevisiae (strain ATCC 204508 / S288c) (Baker's yeast).